Here is a 467-residue protein sequence, read N- to C-terminus: Nuclear distribution protein nudF (467 aa).

Residues 9–41 (QAEELHKSIIAYLASVNLTESSAALRAELGDSV) form the LisH domain. Positions 60 to 87 (TSVVRLQKKIMDLESRCAALQSELDSAT) form a coiled coil. WD repeat units lie at residues 113-154 (GHRN…RTVK), 156-196 (HTKA…KNIR), 200-247 (GHDH…CVKT), 250-289 (GHVDWVRAVAPSIDGRFLLAAGDDRIPRLWDLSSAETKST), 292-352 (GHEH…IKTL), 354-393 (GHDNWVRALAFHPGGKHLLSVADDKTIRCWDLTQECKCVR), 398-428 (AHGHFVTCLRWAPPLIKDGGANGEAETNGTP), and 429-466 (AATSTTNGVRPDPNVATKISIRCVIATGSVDQKVRIFA). Positions 417-439 (GANGEAETNGTPAATSTTNGVRP) are disordered. A compositionally biased stretch (polar residues) spans 422–436 (AETNGTPAATSTTNG).

This sequence belongs to the WD repeat LIS1/nudF family. In terms of assembly, self-associates. Interacts with nudE and dynein.

The protein resides in the cytoplasm. Its subcellular location is the cytoskeleton. The protein localises to the spindle pole. Its function is as follows. Positively regulates the activity of the minus-end directed microtubule motor protein dynein. May enhance dynein-mediated microtubule sliding by targeting dynein to the microtubule plus end. Required for nuclear migration during vegetative growth as well as development. Required for retrograde early endosome (EE) transport from the hyphal tip. Required for localization of dynein to the mitotic spindle poles. Recruits additional proteins to the dynein complex at SPBs. This Aspergillus fumigatus (strain CBS 144.89 / FGSC A1163 / CEA10) (Neosartorya fumigata) protein is Nuclear distribution protein nudF.